Here is a 313-residue protein sequence, read N- to C-terminus: Porphobilinogen deaminase (313 aa).

Cys-242 carries the post-translational modification S-(dipyrrolylmethanemethyl)cysteine.

The protein belongs to the HMBS family. As to quaternary structure, monomer. Requires dipyrromethane as cofactor.

It catalyses the reaction 4 porphobilinogen + H2O = hydroxymethylbilane + 4 NH4(+). Its pathway is porphyrin-containing compound metabolism; protoporphyrin-IX biosynthesis; coproporphyrinogen-III from 5-aminolevulinate: step 2/4. In terms of biological role, tetrapolymerization of the monopyrrole PBG into the hydroxymethylbilane pre-uroporphyrinogen in several discrete steps. The polypeptide is Porphobilinogen deaminase (Erwinia tasmaniensis (strain DSM 17950 / CFBP 7177 / CIP 109463 / NCPPB 4357 / Et1/99)).